The chain runs to 751 residues: Serine/threonine-protein kinase B-raf (751 aa).

Positions 1–32 are enriched in gly residues; the sequence is MAALSGGGGSSSGGGGGGGGGGGGGDGGGGAE. A disordered region spans residues 1-55; that stretch reads MAALSGGGGSSSGGGGGGGGGGGGGDGGGGAEQGQALFNGDMEPEAGAGAAASSA. Alanine 2 is subject to N-acetylalanine. Positions 46-55 are enriched in low complexity; sequence AGAGAAASSA. Serine 135 is modified (phosphoserine). Positions 139–211 constitute an RBD domain; that stretch reads PIVRVFLPNK…TGEELHVEVL (73 aa). Residues histidine 219, cysteine 232, cysteine 235, cysteine 245, cysteine 248, histidine 253, cysteine 256, and cysteine 264 each coordinate Zn(2+). The tract at residues 288 to 440 is disordered; the sequence is EASFPETALP…SSDDWEIPDG (153 aa). Positions 297-324 are enriched in low complexity; it reads PSGSSSAPPSDSTGPQILTSPSPSKSIP. Serine 316 bears the Phosphoserine mark. Positions 331–346 are enriched in basic and acidic residues; that stretch reads PADEDHRNQFGQRDRS. At serine 348 the chain carries Phosphoserine. A Phosphothreonine; by autocatalysis modification is found at threonine 356. Position 379 is a phosphothreonine (threonine 379). A Phosphoserine modification is found at serine 382. Phosphothreonine is present on threonine 384. Over residues 406–432 the composition is skewed to basic and acidic residues; sequence QRERKSSSSSSSEDRSRMKTLGRRDSS. Residues serine 431 and serine 432 each carry the phosphoserine modification. Residues 442-702 enclose the Protein kinase domain; the sequence is ITVGQRIGSG…PQILASIELL (261 aa). ATP is bound by residues 448 to 456 and lysine 468; that span reads IGSGSFGTV. The active-site Proton acceptor is aspartate 561. Lysine 563 participates in a covalent cross-link: Glycyl lysine isopeptide (Lys-Gly) (interchain with G-Cter in ubiquitin). Arginine 656 is subject to Omega-N-methylarginine; by PRMT5. A phosphoserine mark is found at serine 714 and serine 735. Threonine 738 carries the post-translational modification Phosphothreonine; by MAPK1.

It belongs to the protein kinase superfamily. TKL Ser/Thr protein kinase family. RAF subfamily. Monomer. Homodimer. Heterodimerizes with RAF1, and the heterodimer possesses a highly increased kinase activity compared to the respective homodimers or monomers. Heterodimerization is mitogen-regulated and enhanced by 14-3-3 proteins. MAPK1/ERK2 activation can induce a negative feedback that promotes the dissociation of the heterodimer by phosphorylating BRAF at Thr-738. Heterodimerizes (via N-terminus) with KSR1 (via N-terminus) or KSR2 (via N-terminus) in a MAP2K1-dependent manner. Interacts with MAP2K1 and MAP2K2. Found in a complex with at least BRAF, HRAS, MAP2K1, MAPK3 and RGS14. Interacts with RIT1. Interacts (via N-terminus) with RGS14 (via RBD domains); the interaction mediates the formation of a ternary complex with RAF1, a ternary complex inhibited by GNAI1. Interacts with DGKH. Interacts with PRMT5. Interacts with AKAP13, MAP2K1 and KSR1. Identified in a complex with AKAP13, KSR1 and MAP2K1. Interacts with FNIP1 and FNIP2. Zn(2+) serves as cofactor. Post-translationally, phosphorylation at Ser-348 by SGK1 inhibits its activity. Dephosphorylation of Ser-348 by the SHOC2-MRAS-PP1c (SMP) complex consisting of SHOC2, GTP-bound M-Ras/MRAS and the catalytic subunit of protein phosphatase 1 (PPP1CA, PPP1CB or PPP1CC); this relieves inactivation and stimulates kinase activity. In terms of processing, methylation by PRMT5 decreases stability and kinase activity. Ubiquitinated by RNF149; which leads to proteasomal degradation. Polyubiquitinated at Lys-615 in response to EGF.

Its subcellular location is the nucleus. It localises to the cytoplasm. The protein resides in the cell membrane. The enzyme catalyses L-seryl-[protein] + ATP = O-phospho-L-seryl-[protein] + ADP + H(+). It catalyses the reaction L-threonyl-[protein] + ATP = O-phospho-L-threonyl-[protein] + ADP + H(+). In quiescent cells, maintained in an inactive state via an intramolecular interaction between the protein kinase and N-terminal domains. Following mitogen-mediated cell activation, binds via its RGB domain to active HRAS (GTP-bound) which releases the inhibitory intramolecular interaction between the two domains. This allows the MAP2K1-mediated dimerization of KSR1 or KSR2, and BRAF which activates BRAF. In terms of biological role, involved in the transduction of mitogenic signals from the cell membrane to the nucleus. Phosphorylates MAP2K1, and thereby activates the MAP kinase signal transduction pathway. Phosphorylates PFKFB2. May play a role in the postsynaptic responses of hippocampal neurons. The sequence is that of Serine/threonine-protein kinase B-raf from Mus musculus (Mouse).